A 420-amino-acid polypeptide reads, in one-letter code: Serine hydroxymethyltransferase (420 aa).

(6S)-5,6,7,8-tetrahydrofolate is bound by residues Leu-121 and 125–127 (GHL). Lys-229 is subject to N6-(pyridoxal phosphate)lysine.

It belongs to the SHMT family. Homodimer. The cofactor is pyridoxal 5'-phosphate.

It localises to the cytoplasm. It catalyses the reaction (6R)-5,10-methylene-5,6,7,8-tetrahydrofolate + glycine + H2O = (6S)-5,6,7,8-tetrahydrofolate + L-serine. Its pathway is one-carbon metabolism; tetrahydrofolate interconversion. The protein operates within amino-acid biosynthesis; glycine biosynthesis; glycine from L-serine: step 1/1. Catalyzes the reversible interconversion of serine and glycine with tetrahydrofolate (THF) serving as the one-carbon carrier. This reaction serves as the major source of one-carbon groups required for the biosynthesis of purines, thymidylate, methionine, and other important biomolecules. Also exhibits THF-independent aldolase activity toward beta-hydroxyamino acids, producing glycine and aldehydes, via a retro-aldol mechanism. The chain is Serine hydroxymethyltransferase from Aggregatibacter actinomycetemcomitans (Actinobacillus actinomycetemcomitans).